Here is a 160-residue protein sequence, read N- to C-terminus: Xanthine-guanine phosphoribosyltransferase (160 aa).

5-phospho-alpha-D-ribose 1-diphosphate contacts are provided by residues arginine 41–glycine 42 and aspartate 93–threonine 101. A Mg(2+)-binding site is contributed by aspartate 94. Aspartate 97 and isoleucine 140 together coordinate guanine. Xanthine is bound by residues aspartate 97 and isoleucine 140. Residues aspartate 97 to threonine 101 and tryptophan 139 to isoleucine 140 contribute to the GMP site.

It belongs to the purine/pyrimidine phosphoribosyltransferase family. XGPT subfamily. As to quaternary structure, homotetramer. Mg(2+) is required as a cofactor.

The protein localises to the cell inner membrane. It catalyses the reaction GMP + diphosphate = guanine + 5-phospho-alpha-D-ribose 1-diphosphate. It carries out the reaction XMP + diphosphate = xanthine + 5-phospho-alpha-D-ribose 1-diphosphate. The catalysed reaction is IMP + diphosphate = hypoxanthine + 5-phospho-alpha-D-ribose 1-diphosphate. The protein operates within purine metabolism; GMP biosynthesis via salvage pathway; GMP from guanine: step 1/1. Its pathway is purine metabolism; XMP biosynthesis via salvage pathway; XMP from xanthine: step 1/1. In terms of biological role, purine salvage pathway enzyme that catalyzes the transfer of the ribosyl-5-phosphate group from 5-phospho-alpha-D-ribose 1-diphosphate (PRPP) to the N9 position of the 6-oxopurines guanine and xanthine to form the corresponding ribonucleotides GMP (guanosine 5'-monophosphate) and XMP (xanthosine 5'-monophosphate), with the release of PPi. To a lesser extent, also acts on hypoxanthine. This chain is Xanthine-guanine phosphoribosyltransferase, found in Desulfotalea psychrophila (strain LSv54 / DSM 12343).